The chain runs to 573 residues: Glutamate--tRNA ligase (573 aa).

The 'HIGH' region motif lies at 107-117 (PNPDGAFHLGN).

This sequence belongs to the class-I aminoacyl-tRNA synthetase family. Glutamate--tRNA ligase type 2 subfamily.

The protein localises to the cytoplasm. The enzyme catalyses tRNA(Glu) + L-glutamate + ATP = L-glutamyl-tRNA(Glu) + AMP + diphosphate. Functionally, catalyzes the attachment of glutamate to tRNA(Glu) in a two-step reaction: glutamate is first activated by ATP to form Glu-AMP and then transferred to the acceptor end of tRNA(Glu). The sequence is that of Glutamate--tRNA ligase from Thermococcus kodakarensis (strain ATCC BAA-918 / JCM 12380 / KOD1) (Pyrococcus kodakaraensis (strain KOD1)).